Here is a 1839-residue protein sequence, read N- to C-terminus: DNA-directed RNA polymerase II subunit RPB1 (1839 aa).

The Zn(2+) site is built by Cys-66, Cys-69, Cys-76, His-79, Cys-106, Cys-109, and Cys-147. Residues Asp-152–Ala-174 form a disordered region. The segment covering Val-156–Lys-166 has biased composition (basic and acidic residues). Cys-172 contributes to the Zn(2+) binding site. A DNA-binding region spans residues Thr-326–Glu-397. The Mg(2+) site is built by Asp-495, Asp-497, and Asp-499. The segment at Gly-785 to Pro-795 is alpha-amanitin binding. The tract at residues Pro-829–Glu-841 is bridging helix. A compositionally biased stretch (low complexity) spans Pro-1538–Tyr-1726. A disordered region spans residues Pro-1538 to Pro-1839. Tandem repeats lie at residues Tyr-1544–Gly-1550, Tyr-1551–Gly-1557, Tyr-1558–Gly-1564, Tyr-1565–Gly-1571, Tyr-1572–Thr-1578, Tyr-1579–Gly-1585, Tyr-1586–Ala-1592, Tyr-1593–Ser-1599, Tyr-1600–Ser-1606, Tyr-1607–Ser-1613, Tyr-1614–Ser-1620, Tyr-1621–Ser-1627, Tyr-1628–Ser-1634, Tyr-1635–Ala-1641, Tyr-1642–Ala-1648, Tyr-1649–Ala-1655, Tyr-1656–Ser-1662, Tyr-1663–Ser-1669, Tyr-1670–Ser-1676, Tyr-1677–Ser-1683, Tyr-1684–Ser-1690, Tyr-1691–Ala-1697, Tyr-1698–Gly-1704, Tyr-1705–Ser-1711, Tyr-1712–Ser-1718, Tyr-1719–Ser-1725, and Tyr-1726–Lys-1732. Residues Tyr-1544 to Gly-1813 are C-terminal domain (CTD); 37 X 7 AA tandem approximate repeats of Y-[GNS]-P-[QST]-[LNS]-[APT]-[AGKNRSTY]. Residues Asn-1727–Arg-1745 are compositionally biased toward polar residues. A 28; approximate repeat occupies Tyr-1733–Ala-1738. A run of 6 repeats spans residues Tyr-1739–Arg-1745, Tyr-1752–Asn-1758, Tyr-1759–Ser-1765, Tyr-1766–Ser-1772, Tyr-1773–Thr-1779, and Tyr-1780–Tyr-1786. Positions Ser-1747–Ala-1798 are enriched in low complexity. A 35; approximate repeat occupies Tyr-1794–Gly-1799. 2 tandem repeats follow at residues Tyr-1800–Gly-1806 and Tyr-1807–Gly-1813. Positions His-1818 to Pro-1839 are enriched in basic and acidic residues.

Belongs to the RNA polymerase beta' chain family. In terms of assembly, component of the RNA polymerase II (Pol II) complex consisting of at least 12 subunits. Interacts with RDM1. Interacts (via CTD) with PRP40A, PRP40B, PRP40C and CYP59. Interacts with MEE12/CCG1 and MEE14/CBP1. Binds (via CTD) to ATX1, especially when phosphorylated on 'Ser-5' of the heptapeptide repeat. The tandem 7 residues repeats in the C-terminal domain (CTD) can be highly phosphorylated. The phosphorylation activates Pol II. Phosphorylation occurs mainly at residues 'Ser-2' and 'Ser-5' of the heptapeptide repeat. The phosphorylation state is believed to result from the balanced action of site-specific CTD kinases and phosphatase, and a 'CTD code' that specifies the position of Pol II within the transcription cycle has been proposed. ATX1 seems to regulate phosphorylation statment. 'Ser-2' and 'Ser-5' phosphorylation are repressed by flavopiridol (Flap) and seliciclib (Selic), inhibitors of CDK7 and CDK9.

The protein resides in the nucleus. It carries out the reaction RNA(n) + a ribonucleoside 5'-triphosphate = RNA(n+1) + diphosphate. Its function is as follows. DNA-dependent RNA polymerase catalyzes the transcription of DNA into RNA using the four ribonucleoside triphosphates as substrates. Largest and catalytic component of RNA polymerase II which synthesizes mRNA precursors and many functional non-coding RNAs. Forms the polymerase active center together with the second largest subunit. Pol II is the central component of the basal RNA polymerase II transcription machinery. It is composed of mobile elements that move relative to each other. NRPB1 is part of the core element with the central large cleft, the clamp element that moves to open and close the cleft and the jaws that are thought to grab the incoming DNA template. At the start of transcription, a single-stranded DNA template strand of the promoter is positioned within the central active site cleft of Pol II. A bridging helix emanates from NRPB1 and crosses the cleft near the catalytic site and is thought to promote translocation of Pol II by acting as a ratchet that moves the RNA-DNA hybrid through the active site by switching from straight to bent conformations at each step of nucleotide addition. During transcription elongation, Pol II moves on the template as the transcript elongates. Elongation is influenced by the phosphorylation status of the C-terminal domain (CTD) of Pol II largest subunit (NRPB1), which serves as a platform for assembly of factors that regulate transcription initiation, elongation, termination and mRNA processing. In Arabidopsis thaliana (Mouse-ear cress), this protein is DNA-directed RNA polymerase II subunit RPB1.